Consider the following 267-residue polypeptide: Small ribosomal subunit protein uS3 (267 aa).

The 69-residue stretch at 43–111 (IRKAMSKDLE…QVQLNIFEVK (69 aa)) folds into the KH type-2 domain. The disordered stretch occupies residues 216 to 267 (FEEQQAQQSNNRQGRRGDRRPRRGQRNAAPQQNAAAEAPAAAEAPAATETKE). The segment covering 228–240 (QGRRGDRRPRRGQ) has biased composition (basic residues). The span at 241-267 (RNAAPQQNAAAEAPAAAEAPAATETKE) shows a compositional bias: low complexity.

It belongs to the universal ribosomal protein uS3 family. Part of the 30S ribosomal subunit. Forms a tight complex with proteins S10 and S14.

Its function is as follows. Binds the lower part of the 30S subunit head. Binds mRNA in the 70S ribosome, positioning it for translation. The sequence is that of Small ribosomal subunit protein uS3 from Bifidobacterium adolescentis (strain ATCC 15703 / DSM 20083 / NCTC 11814 / E194a).